Consider the following 99-residue polypeptide: Cystatin (99 aa).

Residues 3-99 form the Cystatin domain; it reads GGLSPRSVSD…EEKLCGFQVW (97 aa). A Secondary area of contact motif is present at residues 47 to 51; the sequence is QSVAG. A disulfide bond links cysteine 65 and cysteine 81.

This sequence belongs to the cystatin family. Expressed by the venom gland.

It is found in the secreted. Functionally, inhibits various C1 cysteine proteases including cathepsin L (Ki is 0.1 nM), papain (Ki is 0.19 nM), cathepsin S (Ki is 1.2 nM), and cathepsin B (Ki is 2.5 nM). This protein has no toxic activity and its function in the venom is unknown. It may play a role as housekeeping or regulatory protein. The chain is Cystatin from Naja atra (Chinese cobra).